The sequence spans 612 residues: MIADNSKDFDLKSFLANLTTHSGVYRMLDKHGEIIYVGKAKNLKNRVNSYFSKGAKDSKTLMMVEQVARIEITIAPSDYEAYLLENNLIKQHRPKYNILFKDDKSYPYLVISRDKFPRVSFYRGKSAYKKGQCFGPYVSISSVKNTLNIIQKIFPIRQCENSYYKSRVRPCLQYQIKRCLAPCVGLVSQEQYDEQLAILKKFLAGKFSSVLEEISAKMYQASEDMEYEKAQVYRDQLVILRKLQQQQIVDIQEDKTFDVIGIYMQDSYASIALLQIQNGDVVADRHWSIDAKGQDKTSIMHAFLSHFYLGDEIRNIWPKNIILSKVEFADITDLMNSISQKIGQAINWIVAPAADNLKWLKLAEVNARQKLNIYTSSKSQYQKRLESLKEFLELEKDIKRIECFDISHFQGEATIASCVVYTDEGEDRKSHRRYNIKDIKAGDDYAAIHQAVSRRVSSGLEADNLPDVMIIDGGKGQIHQAEAVFREYGIQDKVQLVSLGKGVERISGKEKIYKGFDDTEYTLDEHNPGFLLLRQVRDSAHDHAIKGQRKKVSANRQSSIIEEIEGVGPKRRKALIMYFGGWQELSRAFVDEIAKVKGISNKLAQEIWECFH.

One can recognise a GIY-YIG domain in the interval 20–98; the sequence is THSGVYRMLD…IKQHRPKYNI (79 aa). The UVR domain maps to 208 to 243; the sequence is SSVLEEISAKMYQASEDMEYEKAQVYRDQLVILRKL.

This sequence belongs to the UvrC family. In terms of assembly, interacts with UvrB in an incision complex.

It localises to the cytoplasm. In terms of biological role, the UvrABC repair system catalyzes the recognition and processing of DNA lesions. UvrC both incises the 5' and 3' sides of the lesion. The N-terminal half is responsible for the 3' incision and the C-terminal half is responsible for the 5' incision. The protein is UvrABC system protein C of Francisella philomiragia subsp. philomiragia (strain ATCC 25017 / CCUG 19701 / FSC 153 / O#319-036).